Here is a 113-residue protein sequence, read N- to C-terminus: Cell cycle control protein 50C (113 aa).

Topologically, residues 1–34 (MEERAQHCLSRLLDNSALKQQELPIHRLYFTARR) are cytoplasmic. A helical transmembrane segment spans residues 35–55 (VLFVFFATGIFCLCMGIILIL). The Extracellular portion of the chain corresponds to 56-113 (SARSTQEIEINYTRICANCAKLRENASNFDKECTCSIPFYLSGKMMVGEIQETRLTLH). Asn-66 is a glycosylation site (N-linked (GlcNAc...) asparagine).

The protein belongs to the CDC50/LEM3 family. Specifically expressed in testis.

It localises to the membrane. The chain is Cell cycle control protein 50C from Homo sapiens (Human).